A 314-amino-acid polypeptide reads, in one-letter code: 4-hydroxy-3-methylbut-2-enyl diphosphate reductase (314 aa).

A [4Fe-4S] cluster-binding site is contributed by C12. (2E)-4-hydroxy-3-methylbut-2-enyl diphosphate contacts are provided by H41 and H74. The dimethylallyl diphosphate site is built by H41 and H74. Residues H41 and H74 each coordinate isopentenyl diphosphate. A [4Fe-4S] cluster-binding site is contributed by C96. H124 contacts (2E)-4-hydroxy-3-methylbut-2-enyl diphosphate. H124 is a dimethylallyl diphosphate binding site. H124 is a binding site for isopentenyl diphosphate. Catalysis depends on E126, which acts as the Proton donor. T167 is a binding site for (2E)-4-hydroxy-3-methylbut-2-enyl diphosphate. C197 contacts [4Fe-4S] cluster. S225, S226, N227, and S269 together coordinate (2E)-4-hydroxy-3-methylbut-2-enyl diphosphate. Dimethylallyl diphosphate contacts are provided by S225, S226, N227, and S269. Isopentenyl diphosphate-binding residues include S225, S226, N227, and S269.

Belongs to the IspH family. [4Fe-4S] cluster is required as a cofactor.

It catalyses the reaction isopentenyl diphosphate + 2 oxidized [2Fe-2S]-[ferredoxin] + H2O = (2E)-4-hydroxy-3-methylbut-2-enyl diphosphate + 2 reduced [2Fe-2S]-[ferredoxin] + 2 H(+). The catalysed reaction is dimethylallyl diphosphate + 2 oxidized [2Fe-2S]-[ferredoxin] + H2O = (2E)-4-hydroxy-3-methylbut-2-enyl diphosphate + 2 reduced [2Fe-2S]-[ferredoxin] + 2 H(+). Its pathway is isoprenoid biosynthesis; dimethylallyl diphosphate biosynthesis; dimethylallyl diphosphate from (2E)-4-hydroxy-3-methylbutenyl diphosphate: step 1/1. The protein operates within isoprenoid biosynthesis; isopentenyl diphosphate biosynthesis via DXP pathway; isopentenyl diphosphate from 1-deoxy-D-xylulose 5-phosphate: step 6/6. Functionally, catalyzes the conversion of 1-hydroxy-2-methyl-2-(E)-butenyl 4-diphosphate (HMBPP) into a mixture of isopentenyl diphosphate (IPP) and dimethylallyl diphosphate (DMAPP). Acts in the terminal step of the DOXP/MEP pathway for isoprenoid precursor biosynthesis. In Aliivibrio fischeri (strain ATCC 700601 / ES114) (Vibrio fischeri), this protein is 4-hydroxy-3-methylbut-2-enyl diphosphate reductase.